A 570-amino-acid chain; its full sequence is 2-isopropylmalate synthase (570 aa).

One can recognise a Pyruvate carboxyltransferase domain in the interval 31–305 (PIWMSTDLRD…DPELDFSHIN (275 aa)). Residues Asp40, His244, His246, and Asn280 each contribute to the Mg(2+) site. Residues 437 to 570 (SDGAIGYVSH…RRSSAQATVA (134 aa)) are regulatory domain.

It belongs to the alpha-IPM synthase/homocitrate synthase family. LeuA type 2 subfamily. In terms of assembly, homodimer. It depends on Mg(2+) as a cofactor.

It localises to the cytoplasm. It carries out the reaction 3-methyl-2-oxobutanoate + acetyl-CoA + H2O = (2S)-2-isopropylmalate + CoA + H(+). It functions in the pathway amino-acid biosynthesis; L-leucine biosynthesis; L-leucine from 3-methyl-2-oxobutanoate: step 1/4. Its function is as follows. Catalyzes the condensation of the acetyl group of acetyl-CoA with 3-methyl-2-oxobutanoate (2-ketoisovalerate) to form 3-carboxy-3-hydroxy-4-methylpentanoate (2-isopropylmalate). This Ralstonia pickettii (strain 12J) protein is 2-isopropylmalate synthase.